We begin with the raw amino-acid sequence, 638 residues long: Threonine--tRNA ligase (638 aa).

Residues 1–61 (MPIITLPDGS…NSDSKVVIIT (61 aa)) form the TGS domain. The tract at residues 242–533 (DHRKLGKKHS…LIEQYEAKFP (292 aa)) is catalytic. Residues cysteine 333, histidine 384, and histidine 510 each contribute to the Zn(2+) site.

This sequence belongs to the class-II aminoacyl-tRNA synthetase family. In terms of assembly, homodimer. The cofactor is Zn(2+).

It localises to the cytoplasm. It catalyses the reaction tRNA(Thr) + L-threonine + ATP = L-threonyl-tRNA(Thr) + AMP + diphosphate + H(+). Functionally, catalyzes the attachment of threonine to tRNA(Thr) in a two-step reaction: L-threonine is first activated by ATP to form Thr-AMP and then transferred to the acceptor end of tRNA(Thr). Also edits incorrectly charged L-seryl-tRNA(Thr). In Prochlorococcus marinus (strain MIT 9215), this protein is Threonine--tRNA ligase.